Reading from the N-terminus, the 312-residue chain is Elongation factor Ts (312 aa).

The interval 84–87 (TDFL) is involved in Mg(2+) ion dislocation from EF-Tu.

The protein belongs to the EF-Ts family.

It is found in the cytoplasm. Functionally, associates with the EF-Tu.GDP complex and induces the exchange of GDP to GTP. It remains bound to the aminoacyl-tRNA.EF-Tu.GTP complex up to the GTP hydrolysis stage on the ribosome. This chain is Elongation factor Ts, found in Caulobacter sp. (strain K31).